A 243-amino-acid polypeptide reads, in one-letter code: Putative C-type lectin protein A7 (243 aa).

Residues 23-43 (IFFILAATNLMIAAFALGCLA) traverse the membrane as a helical segment. One can recognise a C-type lectin domain in the interval 116–223 (GQKACYYVPP…CTTSKLCLCG (108 aa)). 2 disulfide bridges follow: Cys-137–Cys-222 and Cys-198–Cys-214.

It is found in the host membrane. The polypeptide is Putative C-type lectin protein A7 (A7) (Alcelaphine herpesvirus 1 (strain C500) (AlHV-1)).